We begin with the raw amino-acid sequence, 522 residues long: MQPWHGKAMQRASEAGATAPKASARNARGAPMDPTESPAAPEAALPKAGKFGPARKSGSRQKKSAPDTQERPPVRATGARAKKAPQRAQDTQPSDATSAPGAEGLEPPAAREPALSRAGSCRQRGARCSTKPRPPPGPWDVPSPGLPVSAPILVRRDAAPGASKLRAVLEKLKLSRDDISTAAGMVKGVVDHLLLRLKCDSAFRGVGLLNTGSYYEHVKISAPNEFDVMFKLEVPRIQLEEYSNTRAYYFVKFKRNPKENPLSQFLEGEILSASKMLSKFRKIIKEEINDIKDTDVIMKRKRGGSPAVTLLISEKISVDITLALESKSSWPASTQEGLRIQNWLSAKVRKQLRLKPFYLVPKHAKEGNGFQEETWRLSFSHIEKEILNNHGKSKTCCENKEEKCCRKDCLKLMKYLLEQLKERFKDKKHLDKFSSYHVKTAFFHVCTQNPQDSQWDRKDLGLCFDNCVTYFLQCLRTEKLENYFIPEFNLFSSNLIDKRSKEFLTKQIEYERNNEFPVFDEF.

The segment at 1-144 is disordered; sequence MQPWHGKAMQ…PPGPWDVPSP (144 aa). DNA-binding stretches follow at residues 1–160 and 173–215; these read MQPW…DAAP and KLSR…GSYY. K7 is subject to N6-acetyllysine. At S13 the chain carries Phosphoserine. Position 21 is an N6-acetyllysine (K21). Residue S37 is modified to Phosphoserine. An N6-acetyllysine mark is found at K47, K50, K56, K62, and K63. Position 64 is a phosphoserine (S64). Residues 64-73 are compositionally biased toward basic and acidic residues; it reads SAPDTQERPP. Residues 64 to 75 are required for association with the cell membrane; the sequence is SAPDTQERPPVR. A Phosphothreonine modification is found at T68. N6-acetyllysine occurs at positions 82 and 83. The span at 88–97 shows a compositional bias: polar residues; it reads AQDTQPSDAT. T91 carries the post-translational modification Phosphothreonine. Phosphoserine occurs at positions 98, 116, and 129. The span at 98–118 shows a compositional bias: low complexity; it reads SAPGAEGLEPPAAREPALSRA. Residues 120-160 form a required for activation upon DNA viral infection region; that stretch reads SCRQRGARCSTKPRPPPGPWDVPSPGLPVSAPILVRRDAAP. K131 is modified (N6-lactoyllysine). The segment covering 132–144 has biased composition (pro residues); sequence PRPPPGPWDVPSP. S143 is subject to Phosphoserine. The Nuclear export signal signature appears at 169-174; it reads LEKLKL. K173 participates in a covalent cross-link: Glycyl lysine isopeptide (Lys-Gly) (interchain with G-Cter in ubiquitin). D191 carries the polyADP-ribosyl aspartic acid modification. (Microbial infection) Deamidated asparagine; by herpes simplex virus 1/HHV-1 UL37 is present on N210. Residue T211 coordinates GTP. S213 bears the Phosphoserine mark. S213 contacts ATP. At Y215 the chain carries Phosphotyrosine; by BLK. Positions 225 and 227 each coordinate Mg(2+). ATP is bound at residue 225–227; the sequence is EFD. 2',3'-cGAMP is bound at residue D227. K231 participates in a covalent cross-link: Glycyl lysine isopeptide (Lys-Gly) (interchain with G-Cter in SUMO). A Glycyl lysine isopeptide (Lys-Gly) (interchain with G-Cter in ubiquitin) cross-link involves residue K285. E286 carries the 5-glutamyl polyglutamate modification. The Nuclear localization signal signature appears at 295-305; the sequence is DVIMKRKRGGS. The KRKR-loop motif lies at 299–302; it reads KRKR. Phosphoserine; by CDK1 and PKB is present on S305. Residue E314 is modified to 5-glutamyl glutamate. D319 contacts GTP. D319 lines the Mg(2+) pocket. Residue D319 participates in 2',3'-cGAMP binding. The segment at 341 to 382 is interaction with collided ribosomes; sequence QNWLSAKVRKQLRLKPFYLVPKHAKEGNGFQEETWRLSFSHI. A Glycyl lysine isopeptide (Lys-Gly) (interchain with G-Cter in SUMO); alternate cross-link involves residue K347. K347 is covalently cross-linked (Glycyl lysine isopeptide (Lys-Gly) (interchain with G-Cter in ubiquitin); alternate). K362 and R376 together coordinate 2',3'-cGAMP. Residue 376–383 participates in GTP binding; that stretch reads RLSFSHIE. Residue 380–383 coordinates ATP; the sequence is SHIE. Position 384 is an N6-acetyllysine (K384). K384 participates in a covalent cross-link: Glycyl lysine isopeptide (Lys-Gly) (interchain with G-Cter in SUMO); alternate. K384 is covalently cross-linked (Glycyl lysine isopeptide (Lys-Gly) (interchain with G-Cter in ubiquitin); alternate). Positions 384–407 are DNA-binding; the sequence is KEILNNHGKSKTCCENKEEKCCRK. N389 is subject to (Microbial infection) Deamidated asparagine; by herpes simplex virus 1/HHV-1 UL37. Residue H390 coordinates Zn(2+). 2 positions are modified to N6-acetyllysine: K392 and K394. K394 is covalently cross-linked (Glycyl lysine isopeptide (Lys-Gly) (interchain with G-Cter in SUMO)). Residues C396, C397, and C404 each coordinate Zn(2+). S-palmitoyl cysteine attachment occurs at residues C404 and C405. Residues K411, K414, K427, and K428 each participate in a glycyl lysine isopeptide (Lys-Gly) (interchain with G-Cter in ubiquitin) cross-link. N6-acetyllysine is present on K414. K414 provides a ligand contact to ATP. Residues 427 to 429 carry the KKH-loop motif; sequence KKH. Residues S434 and S435 each carry the phosphoserine modification. 435–439 provides a ligand contact to ATP; the sequence is SYHVK. 2 positions are modified to (Microbial infection) Deamidated glutamine; by herpes simplex virus 1/HHV-1 UL37: Q451 and Q454. C474 carries the S-palmitoyl cysteine lipid modification. A Glycyl lysine isopeptide (Lys-Gly) (interchain with G-Cter in SUMO); alternate cross-link involves residue K479. K479 is covalently cross-linked (Glycyl lysine isopeptide (Lys-Gly) (interchain with G-Cter in ubiquitin); alternate). Position 506 is an N6-methyllysine (K506).

Belongs to the mab-21 family. As to quaternary structure, monomer in the absence of DNA. Homodimer in presence of dsDNA: forms a 2:2 dimer with two enzymes binding to two DNA molecules. Interacts with nucleosomes; interaction is mainly mediated via histones H2A and H2B and inactivates the nucleotidyltransferase activity by blocking DNA-binding and subsequent activation. Interacts with PQBP1 (via WW domain). Interacts with TRIM14; this interaction recruits USP14, leading to deubiquitinate and stabilize CGAS and promote type I interferon production. Interacts with ZCCHC3; promoting sensing of dsDNA by CGAS. Interacts (when not monomethylated) with (poly-ADP-ribosylated) PARP1; interaction takes place in the nucleus and prevents the formation of the PARP1-TIMELESS complex. Interacts (when monomethylated) with SGF29; interaction with SGF29 prevents interaction with PARP1. Interacts with PCBP2; preventing the formation of liquid-like droplets in which CGAS is activated. Interacts with IRGM; promoting CGAS degradation. Interacts with DDX41. In terms of assembly, (Microbial infection) Interacts with herpes virus 8/HHV-8 protein ORF52; this interaction inhibits cGAS enzymatic activity by preventing the formation of liquid-like droplets by CGAS. (Microbial infection) Interacts with herpes simplex virus 1 protein UL37; this interaction deaminates CGAS and inhibits its activation. As to quaternary structure, (Microbial infection) Interacts with vaccinia virus protein OPG067; this interaction promotes CGAS proteasomal degradation. In terms of assembly, (Microbial infection) Interacts with cytomegalovirus protein UL31; this interaction promotes dissociation of DNA from CGAS, thereby inhibiting the enzymatic activity of CGAS. (Microbial infection) Interacts with herpes simplex virus 1 tegument protein VP22 (UL49); this interaction inhibits cGAS enzymatic activity by preventing the formation of liquid-like droplets by CGAS. As to quaternary structure, (Microbial infection) Interacts with herpesvirus 3 tegument protein VP22 (ORF9); this interaction inhibits cGAS enzymatic activity by preventing the formation of liquid-like droplets by CGAS. In terms of assembly, (Microbial infection) Interacts with human cytomegalovirus proteins UL42 and UL83; these interactions result in the inhibition of cGAS-STING signaling. Requires Mg(2+) as cofactor. Mn(2+) is required as a cofactor. It depends on Zn(2+) as a cofactor. Post-translationally, the N-terminal disordered part (1-160) is phosphorylated by AURKB during the G2-M transition, blocking CGAS liquid phase separation and preventing activation. Phosphorylation at Tyr-215 by BLK promotes cytosolic retention. Localizes into the nucleus following dephosphorylation at Tyr-215. Phosphorylation at Ser-435 activates the nucleotidyltransferase activity. Dephosphorylation at Ser-435 by PPP6C impairs its ability to bind GTP, thereby inactivating it. Phosphorylation at Thr-68 and Ser-213 by PRKDC inhibits its cyclic GMP-AMP synthase activity by impairing homodimerization and activation. Phosphorylation at Ser-305 by AKT (AKT1, AKT2 or AKT3) suppresses the nucleotidyltransferase activity. Phosphorylation at Ser-305 by CDK1 during mitosis leads to its inhibition, thereby preventing CGAS activation by self-DNA during mitosis. Dephosphorylated at Ser-305 by protein phosphatase PP1 upon mitotic exit. Ubiquitinated at Lys-414 via 'Lys-48'-linked polyubiquitin chains, leading to its SQSTM1-mediated autophagic degradation. Interaction with TRIM14 promotes recruitment of USP14, leading to deubiquitinate Lys-414 and stabilize CGAS. Ubiquitinated at Lys-173 and Lys-384 by RNF185 via 'Lys-27'-linked polyubiquitination, promoting CGAS cyclic GMP-AMP synthase activity. Monoubiquitination at Lys-347 by TRIM56 promotes oligomerization and subsequent activation. Monoubiquitination by TRIM41 promotes CGAS activation. Ubiquitination at Lys-285 and Lys-479 via 'Lys-48'-linked polyubiquitination promotes its degradation. Deubiquitination at Lys-285 by USP29 promotes its stabilization. Deubiquitinated by USP27X, promoting its stabilization. Ubiquitinated at Lys-411 via 'Lys-63'-linked polyubiquitin chains by MARCHF8, leading to the inhibition of its DNA binding ability. In cycling cells, nucleosome-bound CGAS is ubiquitinated at Lys-427 and Lys-428 via 'Lys-48'-linked polyubiquitin chains by the ECS(SPSB3) complex, leading to its degradation: ubiquitination and degradation of nuclear CGAS during G1 and G2 phases is required to promote low intranuclear CGAS abundance before the next mitotic cycle. In terms of processing, sumoylated at Lys-231 and Lys-479 by TRIM38 in uninfected cells and during the early phase of viral infection, promoting its stability by preventing ubiquitination at Lys-285 and Lys-479, and subsequent degradation. Desumoylated by SENP2 during the late phase of viral infection. Sumoylation at Lys-347, Lys-384 and Lys-394 prevents DNA-binding, oligomerization and nucleotidyltransferase activity. Desumoylation at Lys-347, Lys-384 and Lys-394 by SENP7 relieves inhibition and activates CGAS. Post-translationally, polyglutamylated by TTLL6 at Glu-286, leading to impair DNA-binding activity. Monoglutamylated at Glu-314 by TTLL4, leading to impair the nucleotidyltransferase activity. Deglutamylated by AGBL5/CCP5 and AGBL6/CCP6. Acetylation at Lys-384, Lys-394 and Lys-414 inhibits the cyclic GMP-AMP synthase activity. Deacetylated upon cytosolic DNA challenge such as viral infections. Acetylation can be mediated by aspirin (acetylsalicylate) drug, which directly acetylates CGAS. Acetylation by aspirin efficiently inhibits CGAS-mediated immune responses and is able to suppress self-DNA-induced autoimmunity. Acetylation at Lys-47, Lys-56, Lys-62 and Lys-83 by KAT5 increases the cyclic GMP-AMP synthase activity by promoting DNA-binding and subsequent activation. In terms of processing, proteolytically cleaved by apoptotic caspases during apoptosis, leading to its inactivation. The damage of the nucleus and the mitochondria during apoptosis leads to leakage of nuclear and mitochondrial DNA, which activate CGAS: cleavage and inactivation during apoptosis in required to prevent cytokine overproduction. Cleaved by CASP3 at Asp-319 during virus-induced apoptosis, thereby inactivating it and preventing cytokine overproduction. Cleaved by CASP1 at Asp-140 and Asp-157 upon DNA virus infection; the cleavage impairs cGAMP production. Also cleaved by the pyroptotic CASP4 and CASP5 during non-canonical inflammasome activation; they don't cut at the same sites than CASP1. Post-translationally, degraded via selective autophagy following interaction with IRGM. IRGM promotes CGAS recruitment to autophagosome membranes, promoting its SQSTM1/p62-dependent autophagic degradation. Poly-ADP-ribosylation at Asp-191 by PARP1 impairs DNA-binding, thereby preventing the cyclic GMP-AMP synthase activity. In terms of processing, palmitoylation at Cys-474 by ZDHHC18 impairs DNA-binding, thereby preventing the cyclic GMP-AMP synthase activity. Palmitoylation at Cys-404 and Cys-405 by ZDHHC9 promotes homodimerization and cyclic GMP-AMP synthase activity. Depalmitoylation at Cys-404 and Cys-405 by LYPLAL1 impairs homodimerization and cyclic GMP-AMP synthase activity. Post-translationally, monomethylated at Lys-506 by SETD7. Monomethylation promotes interaction with SGF29, preventing interaction between PARP1 nad SGF29. Demethylation by RIOX1 promotes interaction with PARP1, followed by PARP1 inactivation. Lactylation by AARS2 prevents ability to undergo liquid-liquid phase separation (LLPS), thereby inhibiting CGAS activation. In terms of processing, (Microbial infection) Deamidated on 'Asn-210' by herpes simplex virus 1 protein UL37. This modification significantly reduces CGAS-dependent cGAMP production and innate immune signaling induced by dsDNA. Post-translationally, (Microbial infection) Degraded by an autophagy-mediated mechanism in presence of Chikungunya virus capsid protein. In terms of tissue distribution, expressed in the monocytic cell line THP1.

It is found in the nucleus. The protein localises to the chromosome. The protein resides in the cell membrane. Its subcellular location is the cytoplasm. It localises to the cytosol. The catalysed reaction is GTP + ATP = 2',3'-cGAMP + 2 diphosphate. It carries out the reaction GTP + ATP = pppGp(2'-5')A + diphosphate. It catalyses the reaction pppGp(2'-5')A = 2',3'-cGAMP + diphosphate. The enzyme activity is strongly increased by double-stranded DNA (dsDNA), but not by single-stranded DNA or RNA. DNA-binding induces the formation of liquid-like droplets in which CGAS is activated. Liquid-like droplets also create a selective environment that restricts entry of negative regulators, such as TREX1 or BANF1/BAF, allowing sensing of DNA. A number of mechanisms exist to restrict its activity toward self-DNA. The nucleotidyltransferase activity is inhibited in the nucleus via its association with nucleosomes: interacts with the acidic patch of histones H2A and H2B, thereby blocking DNA-binding and subsequent activation. CGAS is also inactive when associated with mitotic chromatin. Chromatin-bound CGAS cannot be activated by exogenous DNA in mitotic cells: phosphorylation of the N-terminal disordered part by AURKB during the G2-M transition blocks CGAS liquid phase separation and activation. Activity toward self-DNA is inhibited by BANF1/BAF upon acute loss of nuclear membrane integrity: BANF1/BAF acts by outcompeting CGAS for DNA-binding, thereby preventing CGAS activation. DNA-induced activation at micronuclei is also limited by TREX1, which degrades micronuclear DNA upon nuclear envelope rupture, thereby preventing CGAS activation. CGAS can be released from nucleosomes and activated by MRE11 component of the MRN complex, which displaces CGAS from acidic-patch-mediated sequestration. Acetylation at Lys-384, Lys-394 and Lys-414 inhibits the cyclic GMP-AMP synthase activity. Inhibited by aspirin (acetylsalicylate) drug, which acetylates CGAS. Acetylation by KAT5 increases the cyclic GMP-AMP synthase activity by promoting DNA-binding and subsequent activation. Phosphorylation at Ser-305 suppresses the nucleotidyltransferase activity. Phosphorylation at Ser-435 promotes the cyclic GMP-AMP synthase activity. Phosphorylation at Thr-68 and Ser-213 inhibits its cyclic GMP-AMP synthase activity. Ubiquitination at Lys-173 and Lys-384 via 'Lys-27'-linked polyubiquitination enhances the cyclic GMP-AMP synthase activity. Monoubiquitination at Lys-347 promotes oligomerization and subsequent activation. Sumoylation at Lys-347, Lys-384 and Lys-394 prevents DNA-binding, oligomerization and nucleotidyltransferase activity. The enzyme activity is impaired by the cleavage at Asp-140 and Asp-157 produced by CASP1. In addition to DNA, also activated by collided ribosomes upon translation stress: specifically binds collided ribosomes, promoting its activation and triggering type-I interferon production. Strongly inhibited by compound PF-06928215, which is specific for human protein. Inhibited by small-molecule inhibitors with a pyridoindole tricyclic core G108, G140 and G150. Its activity is regulated as follows. (Microbial infection) Nucleotidyltransferase activity is inhibited by different herpesvirus tegument proteins (Herpes simplex virus 1 tegument protein VP22, herpes virus 8 protein ORF52 and herpesvirus 3 tegument protein VP22/ORF9). Viral tegument proteins act by disrupting liquid-like droplets in which CGAS is activated, thereby preventing CGAS activity. In terms of biological role, nucleotidyltransferase that catalyzes the formation of cyclic GMP-AMP (2',3'-cGAMP) from ATP and GTP and plays a key role in innate immunity. Catalysis involves both the formation of a 2',5' phosphodiester linkage at the GpA step and the formation of a 3',5' phosphodiester linkage at the ApG step, producing c[G(2',5')pA(3',5')p]. Acts as a key DNA sensor: directly binds double-stranded DNA (dsDNA), inducing the formation of liquid-like droplets in which CGAS is activated, leading to synthesis of 2',3'-cGAMP, a second messenger that binds to and activates STING1, thereby triggering type-I interferon production. Preferentially recognizes and binds curved long dsDNAs of a minimal length of 40 bp. Acts as a key foreign DNA sensor, the presence of double-stranded DNA (dsDNA) in the cytoplasm being a danger signal that triggers the immune responses. Has antiviral activity by sensing the presence of dsDNA from DNA viruses in the cytoplasm. Also acts as an innate immune sensor of infection by retroviruses, such as HIV-2, by detecting the presence of reverse-transcribed DNA in the cytosol. In contrast, HIV-1 is poorly sensed by CGAS, due to its capsid that cloaks viral DNA from CGAS detection. Detection of retroviral reverse-transcribed DNA in the cytosol may be indirect and be mediated via interaction with PQBP1, which directly binds reverse-transcribed retroviral DNA. Also detects the presence of DNA from bacteria, such as M.tuberculosis. 2',3'-cGAMP can be transferred from producing cells to neighboring cells through gap junctions, leading to promote STING1 activation and convey immune response to connecting cells. 2',3'-cGAMP can also be transferred between cells by virtue of packaging within viral particles contributing to IFN-induction in newly infected cells in a cGAS-independent but STING1-dependent manner. Also senses the presence of neutrophil extracellular traps (NETs) that are translocated to the cytosol following phagocytosis, leading to synthesis of 2',3'-cGAMP. In addition to foreign DNA, can also be activated by endogenous nuclear or mitochondrial DNA. When self-DNA leaks into the cytosol during cellular stress (such as mitochondrial stress, SARS-CoV-2 infection causing severe COVID-19 disease, DNA damage, mitotic arrest or senescence), or is present in form of cytosolic micronuclei, CGAS is activated leading to a state of sterile inflammation. Acts as a regulator of cellular senescence by binding to cytosolic chromatin fragments that are present in senescent cells, leading to trigger type-I interferon production via STING1 and promote cellular senescence. Also involved in the inflammatory response to genome instability and double-stranded DNA breaks: acts by localizing to micronuclei arising from genome instability. Micronuclei, which are frequently found in cancer cells, consist of chromatin surrounded by their own nuclear membrane: following breakdown of the micronuclear envelope, a process associated with chromothripsis, CGAS binds self-DNA exposed to the cytosol, leading to 2',3'-cGAMP synthesis and subsequent activation of STING1 and type-I interferon production. Activated in response to prolonged mitotic arrest, promoting mitotic cell death. In a healthy cell, CGAS is however kept inactive even in cellular events that directly expose it to self-DNA, such as mitosis, when cGAS associates with chromatin directly after nuclear envelope breakdown or remains in the form of postmitotic persistent nuclear cGAS pools bound to chromatin. Nuclear CGAS is inactivated by chromatin via direct interaction with nucleosomes, which block CGAS from DNA binding and thus prevent CGAS-induced autoimmunity. Also acts as a suppressor of DNA repair in response to DNA damage: inhibits homologous recombination repair by interacting with PARP1, the CGAS-PARP1 interaction leading to impede the formation of the PARP1-TIMELESS complex. In addition to DNA, also sense translation stress: in response to translation stress, translocates to the cytosol and associates with collided ribosomes, promoting its activation and triggering type-I interferon production. In contrast to other mammals, human CGAS displays species-specific mechanisms of DNA recognition and produces less 2',3'-cGAMP, allowing a more fine-tuned response to pathogens. This Homo sapiens (Human) protein is Cyclic GMP-AMP synthase.